Consider the following 270-residue polypeptide: Homeobox protein Hox-D12 (270 aa).

Residues 102-122 (APEAAAGPEERGRTRPSFAPE) are disordered. Residues 202-261 (ARKKRKPYTKQQIAELENEFLVNEFINRQKRKELSNRLNLSDQQVKIWFQNRRMKKKRVV) constitute a DNA-binding region (homeobox).

This sequence belongs to the Abd-B homeobox family.

It is found in the nucleus. In terms of biological role, sequence-specific transcription factor which is part of a developmental regulatory system that provides cells with specific positional identities on the anterior-posterior axis. The chain is Homeobox protein Hox-D12 (HOXD12) from Homo sapiens (Human).